The primary structure comprises 155 residues: Endoribonuclease YbeY (155 aa).

Residues His114, His118, and His124 each coordinate Zn(2+).

The protein belongs to the endoribonuclease YbeY family. Zn(2+) serves as cofactor.

It is found in the cytoplasm. Single strand-specific metallo-endoribonuclease involved in late-stage 70S ribosome quality control and in maturation of the 3' terminus of the 16S rRNA. The polypeptide is Endoribonuclease YbeY (Escherichia coli O17:K52:H18 (strain UMN026 / ExPEC)).